The chain runs to 247 residues: UPF0259 membrane protein BUsg_265 (247 aa).

6 consecutive transmembrane segments (helical) span residues 20–40 (IKIIIFISVLAAFISILINVL), 82–102 (IFKIFEFLISKTFLLGSIITL), 114–134 (IQFSLNSLCKFLPSLFILNFI), 137–157 (FFIQIGFMFFIFPGIFLSVLL), 188–208 (IVGTSVLFWMCVKFILTTVFS), and 217–237 (FIFLILNINMNIFFSILIVYL).

The protein belongs to the UPF0259 family.

It is found in the cell membrane. The sequence is that of UPF0259 membrane protein BUsg_265 from Buchnera aphidicola subsp. Schizaphis graminum (strain Sg).